Here is a 311-residue protein sequence, read N- to C-terminus: ATP synthase subunit a (311 aa).

The next 6 membrane-spanning stretches (helical) occupy residues 62-82 (AVHV…GFIF), 123-143 (IAPM…MDLI), 170-190 (DPNA…MFSI), 213-233 (LWYL…VALI), 253-273 (IFIL…VGGV), and 276-296 (WAWA…FMVL).

The protein belongs to the ATPase A chain family. As to quaternary structure, F-type ATPases have 2 components, CF(1) - the catalytic core - and CF(0) - the membrane proton channel. CF(1) has five subunits: alpha(3), beta(3), gamma(1), delta(1), epsilon(1). CF(0) has three main subunits: a(1), b(2) and c(9-12). The alpha and beta chains form an alternating ring which encloses part of the gamma chain. CF(1) is attached to CF(0) by a central stalk formed by the gamma and epsilon chains, while a peripheral stalk is formed by the delta and b chains.

The protein resides in the cell inner membrane. Its function is as follows. Key component of the proton channel; it plays a direct role in the translocation of protons across the membrane. The chain is ATP synthase subunit a from Saccharophagus degradans (strain 2-40 / ATCC 43961 / DSM 17024).